Here is a 773-residue protein sequence, read N- to C-terminus: LON peptidase N-terminal domain and RING finger protein 1 (773 aa).

The disordered stretch occupies residues 1 to 29 (MSSPAVARTSPGGSREMAPAPQGRGRFWE). Residues 48–81 (WELLLRRGELLALGGHLKGALEAFAAALRRGAPA) form a TPR 1 repeat. An RING-type 1 zinc finger spans residues 123-159 (CLGCRGFLSEPVTVPCGHSYCRRCLRRELRARCRLCR). TPR repeat units follow at residues 212–244 (ARAAGRLGELLHQGRYREALAAACEALRAEPSD), 246–278 (IVKIYRAESYAGLQEFKAAIEDLNAVLFQLPDW), and 279–312 (PEVYFRKGKVLCDAGFLGDALQLFLQCLALDEDF). Residues 359–370 (EESQSLNEPSPK) show a composition bias toward polar residues. The segment at 359-388 (EESQSLNEPSPKQSEEIPEVTSEPVKGSLN) is disordered. A Phosphoserine modification is found at serine 431. The RING-type 2 zinc-finger motif lies at 479 to 517 (CSLCMRLFFEPVTTPCGHSFCKNCLERCLDHAPYCPLCK). Residues 558–768 (TAELSHLTKN…KIQHILTYFS (211 aa)) enclose the Lon N-terminal domain.

The protein is LON peptidase N-terminal domain and RING finger protein 1 (LONRF1) of Homo sapiens (Human).